The following is a 107-amino-acid chain: DNA polymerase delta subunit 4 (107 aa).

The PCNA-interaction protein motif (PIP box) signature appears at 1-16 (MGRKRFITDSYPVVKK). The interval 1–40 (MGRKRFITDSYPVVKKREGPPGHSKGELAPELGEDTQSLS) is disordered. Residues 15–28 (KKREGPPGHSKGEL) are compositionally biased toward basic and acidic residues.

Belongs to the DNA polymerase delta subunit 4 family. As to quaternary structure, component of the tetrameric DNA polymerase delta complex (Pol-delta4), which consists of POLD1/p125, POLD2/p50, POLD3/p66/p68 and POLD4/p12, with POLD1 bearing DNA polymerase and 3' to 5' proofreading exonuclease activities. Within this complex, directly interacts with POLD1 and POLD2. Directly interacts with PCNA, as do POLD1 and POLD3; this interaction stimulates Pol-delta4 polymerase activity. As POLD1 and POLD2, directly interacts with WRNIP1; this interaction stimulates DNA polymerase delta-mediated DNA synthesis, independently of the presence of PCNA, possibly by increasing initiation frequency. Upon genotoxic stress induced by DNA damaging agents or by replication stress, POLD4 is proteolytically degraded and Pol-delta4 is converted into a trimeric form of the complex (Pol-delta3) that has an increased proofreading activity. The DNA polymerase delta complex interacts with POLDIP2; this interaction is probably mediated through direct binding to POLD2. Ubiquitinated; undergoes 'Lys-48'-linked polyubiquitination in response to UV irradiation or treatment with an alkylating agent, leading to proteasomal degradation. This modification is mediated, at least in part, by RNF8. Post-translationally, ubiquitinated; undergoes 'Lys-48'-linked ubiquitination in response to UV irradiation, leading to proteasomal degradation. This modification is partly mediated by RNF8 and by the DCX(DTL) E3 ubiquitin ligase complex (also called CRL4(CDT2)). Efficient degradation requires the presence of PCNA and is required for the inhibition of fork progression after DNA damage.

It is found in the nucleus. In terms of biological role, as a component of the tetrameric DNA polymerase delta complex (Pol-delta4), plays a role in high fidelity genome replication and repair. Within this complex, increases the rate of DNA synthesis and decreases fidelity by regulating POLD1 polymerase and proofreading 3' to 5' exonuclease activity. Pol-delta4 participates in Okazaki fragment processing, through both the short flap pathway, as well as a nick translation system. Under conditions of DNA replication stress, required for the repair of broken replication forks through break-induced replication (BIR), a mechanism that may induce segmental genomic duplications of up to 200 kb. Involved in Pol-delta4 translesion synthesis (TLS) of templates carrying O6-methylguanine or abasic sites. Its degradation in response to DNA damage is required for the inhibition of fork progression and cell survival. This Mus musculus (Mouse) protein is DNA polymerase delta subunit 4 (Pold4).